Here is a 273-residue protein sequence, read N- to C-terminus: Dermonecrotic toxin LdSicTox-alphaIB1bi (273 aa).

His-5 is a catalytic residue. Mg(2+) is bound by residues Glu-25 and Asp-27. Catalysis depends on His-41, which acts as the Nucleophile. Intrachain disulfides connect Cys-45–Cys-51 and Cys-47–Cys-190. Position 85 (Asp-85) interacts with Mg(2+). Residue Asn-250 is glycosylated (N-linked (GlcNAc...) asparagine).

The protein belongs to the arthropod phospholipase D family. Class II subfamily. It depends on Mg(2+) as a cofactor. As to expression, expressed by the venom gland.

The protein resides in the secreted. It carries out the reaction an N-(acyl)-sphingosylphosphocholine = an N-(acyl)-sphingosyl-1,3-cyclic phosphate + choline. It catalyses the reaction an N-(acyl)-sphingosylphosphoethanolamine = an N-(acyl)-sphingosyl-1,3-cyclic phosphate + ethanolamine. The catalysed reaction is a 1-acyl-sn-glycero-3-phosphocholine = a 1-acyl-sn-glycero-2,3-cyclic phosphate + choline. The enzyme catalyses a 1-acyl-sn-glycero-3-phosphoethanolamine = a 1-acyl-sn-glycero-2,3-cyclic phosphate + ethanolamine. In terms of biological role, dermonecrotic toxins cleave the phosphodiester linkage between the phosphate and headgroup of certain phospholipids (sphingolipid and lysolipid substrates), forming an alcohol (often choline) and a cyclic phosphate. This toxin acts on sphingomyelin (SM). It may also act on ceramide phosphoethanolamine (CPE), lysophosphatidylcholine (LPC) and lysophosphatidylethanolamine (LPE), but not on lysophosphatidylserine (LPS), and lysophosphatidylglycerol (LPG). It acts by transphosphatidylation, releasing exclusively cyclic phosphate products as second products. Induces dermonecrosis, hemolysis, increased vascular permeability, edema, inflammatory response, and platelet aggregation. The polypeptide is Dermonecrotic toxin LdSicTox-alphaIB1bi (Loxosceles deserta (Desert recluse spider)).